The following is a 797-amino-acid chain: Kinesin-like protein KIF18B (797 aa).

The 342-residue stretch at 11–352 (TVAVVVRVRP…LKYANRAKEI (342 aa)) folds into the Kinesin motor domain. 110–117 (GATGAGKT) contacts ATP. Positions 367 to 402 (ISKYATICEQLKTEVADLQAKLRAYEDAARDAGKQI) form a coiled coil. 4 disordered regions span residues 412–476 (EEAV…PNRL), 528–564 (AAVS…PSVP), 579–640 (LSSP…KEPQ), and 730–797 (KGSS…SGPR). Residues 594–608 (MSNTSRLETPHSLNT) are compositionally biased toward polar residues. Positions 731–744 (GSSIPKPSSISKGS) are enriched in low complexity.

Belongs to the TRAFAC class myosin-kinesin ATPase superfamily. Kinesin family.

Its subcellular location is the nucleus. It is found in the cytoplasm. It localises to the cytoskeleton. In terms of biological role, may play an important role in microtubule plus-end depolymerizing activity in mitotic cells. This chain is Kinesin-like protein KIF18B (KIF18B), found in Gallus gallus (Chicken).